Consider the following 188-residue polypeptide: Threonylcarbamoyl-AMP synthase (188 aa).

The YrdC-like domain maps to 8-188; sequence EGAQPGLHAY…DLATGKILRA (181 aa).

The protein belongs to the SUA5 family. TsaC subfamily.

It is found in the cytoplasm. It carries out the reaction L-threonine + hydrogencarbonate + ATP = L-threonylcarbamoyladenylate + diphosphate + H2O. Functionally, required for the formation of a threonylcarbamoyl group on adenosine at position 37 (t(6)A37) in tRNAs that read codons beginning with adenine. Catalyzes the conversion of L-threonine, HCO(3)(-)/CO(2) and ATP to give threonylcarbamoyl-AMP (TC-AMP) as the acyladenylate intermediate, with the release of diphosphate. The protein is Threonylcarbamoyl-AMP synthase of Thiobacillus denitrificans (strain ATCC 25259 / T1).